A 785-amino-acid chain; its full sequence is uncharacterized protein (785 aa).

Polar residues predominate over residues K53–L65. The interval K53 to I162 is disordered. The segment covering A66–A79 has biased composition (acidic residues). Polar residues predominate over residues S81–G94. Phosphoserine is present on S215. Disordered regions lie at residues K571–N590 and D631–F657. The segment covering S575–E584 has biased composition (acidic residues). Phosphoserine is present on S667. The tract at residues D693–G785 is disordered. A compositionally biased stretch (basic residues) spans R725–R739. Over residues F776–G785 the composition is skewed to low complexity.

This is an uncharacterized protein from Saccharomyces cerevisiae (strain ATCC 204508 / S288c) (Baker's yeast).